We begin with the raw amino-acid sequence, 471 residues long: Ribulose bisphosphate carboxylase large chain (471 aa).

Residues asparagine 115 and threonine 165 each coordinate substrate. The Proton acceptor role is filled by lysine 167. Residue lysine 169 coordinates substrate. Mg(2+) contacts are provided by lysine 193, aspartate 195, and glutamate 196. Position 193 is an N6-carboxylysine (lysine 193). Residue histidine 286 is the Proton acceptor of the active site. Substrate-binding residues include arginine 287, histidine 319, and serine 371.

The protein belongs to the RuBisCO large chain family. Type I subfamily. Heterohexadecamer of 8 large chains and 8 small chains. The cofactor is Mg(2+).

Its subcellular location is the carboxysome. It carries out the reaction 2 (2R)-3-phosphoglycerate + 2 H(+) = D-ribulose 1,5-bisphosphate + CO2 + H2O. The catalysed reaction is D-ribulose 1,5-bisphosphate + O2 = 2-phosphoglycolate + (2R)-3-phosphoglycerate + 2 H(+). In terms of biological role, ruBisCO catalyzes two reactions: the carboxylation of D-ribulose 1,5-bisphosphate, the primary event in carbon dioxide fixation, as well as the oxidative fragmentation of the pentose substrate in the photorespiration process. Both reactions occur simultaneously and in competition at the same active site. This is Ribulose bisphosphate carboxylase large chain from Synechococcus sp. (strain CC9605).